Consider the following 510-residue polypeptide: Histidine ammonia-lyase (510 aa).

Residues 143–145 constitute a cross-link (5-imidazolinone (Ala-Gly)); it reads ASG. Residue Ser144 is modified to 2,3-didehydroalanine (Ser).

This sequence belongs to the PAL/histidase family. In terms of processing, contains an active site 4-methylidene-imidazol-5-one (MIO), which is formed autocatalytically by cyclization and dehydration of residues Ala-Ser-Gly.

It is found in the cytoplasm. The catalysed reaction is L-histidine = trans-urocanate + NH4(+). The protein operates within amino-acid degradation; L-histidine degradation into L-glutamate; N-formimidoyl-L-glutamate from L-histidine: step 1/3. The sequence is that of Histidine ammonia-lyase from Pseudomonas putida (strain ATCC 47054 / DSM 6125 / CFBP 8728 / NCIMB 11950 / KT2440).